A 1379-amino-acid chain; its full sequence is DNA-directed RNA polymerase subunit beta (1379 aa).

The protein belongs to the RNA polymerase beta chain family. As to quaternary structure, the RNAP catalytic core consists of 2 alpha, 1 beta, 1 beta' and 1 omega subunit. When a sigma factor is associated with the core the holoenzyme is formed, which can initiate transcription.

It carries out the reaction RNA(n) + a ribonucleoside 5'-triphosphate = RNA(n+1) + diphosphate. In terms of biological role, DNA-dependent RNA polymerase catalyzes the transcription of DNA into RNA using the four ribonucleoside triphosphates as substrates. This chain is DNA-directed RNA polymerase subunit beta, found in Rhizobium etli (strain ATCC 51251 / DSM 11541 / JCM 21823 / NBRC 15573 / CFN 42).